The primary structure comprises 252 residues: NAC domain-containing protein 83 (252 aa).

Residues 14-160 form the NAC domain; sequence LPPGFRFHPT…NWVLCRIFLK (147 aa). A DNA-binding region spans residues 110 to 166; it reads VGLKKTLVFYKGKPPHGSRTDWIMHEYRLSSSPPSSMGPTQNWVLCRIFLKKRAGNK. Disordered stretches follow at residues 165–194 and 217–252; these read NKND…IITT and LNLL…NSFR. 2 stretches are compositionally biased toward low complexity: residues 180-194 and 219-252; these read NNNN…IITT and LLPS…NSFR. Residues 213–226 are PEST-like; that stretch reads RTTDLNLLPSSPSS.

In terms of assembly, interacts with NAC007/VND4, NAC026/VND5 and NAC030/VND7. Interacts with the mungbean yellow mosaic virus (MYMV) AC1 replication-associated protein. As to expression, expressed in xylem and phloem cells in roots and inflorescence stems. Highly expressed in senescent leaves. Expressed in roots, and abscission and dehiscence tissues, such as axils of bracts and abscission zones in cauline leaves and siliques.

The protein localises to the nucleus. Transcriptional repressor that negatively regulates the expression of genes involved in xylem vessel formation. Represses the transcriptional activation activity of NAC030/VND7, which regulates protoxylem vessel differentiation by promoting immature xylem vessel-specific genes expression. Transcriptional activator that regulates the COLD-REGULATED (COR15A and COR15B) and RESPONSIVE TO DEHYDRATION (LTI78/RD29A and LTI65/RD29B) genes by binding directly to their promoters. Mediates signaling crosstalk between salt stress response and leaf aging process. May play a role in DNA replication of mungbean yellow mosaic virus. In Arabidopsis thaliana (Mouse-ear cress), this protein is NAC domain-containing protein 83.